Consider the following 345-residue polypeptide: Biotin synthase (345 aa).

The 228-residue stretch at 60-287 (NQVQLSTLLS…RTMVRLSAGR (228 aa)) folds into the Radical SAM core domain. [4Fe-4S] cluster-binding residues include Cys75, Cys79, and Cys82. The [2Fe-2S] cluster site is built by Cys119, Cys150, Cys210, and Arg282.

Belongs to the radical SAM superfamily. Biotin synthase family. As to quaternary structure, homodimer. [4Fe-4S] cluster is required as a cofactor. Requires [2Fe-2S] cluster as cofactor.

It carries out the reaction (4R,5S)-dethiobiotin + (sulfur carrier)-SH + 2 reduced [2Fe-2S]-[ferredoxin] + 2 S-adenosyl-L-methionine = (sulfur carrier)-H + biotin + 2 5'-deoxyadenosine + 2 L-methionine + 2 oxidized [2Fe-2S]-[ferredoxin]. The protein operates within cofactor biosynthesis; biotin biosynthesis; biotin from 7,8-diaminononanoate: step 2/2. Functionally, catalyzes the conversion of dethiobiotin (DTB) to biotin by the insertion of a sulfur atom into dethiobiotin via a radical-based mechanism. This is Biotin synthase from Polaromonas naphthalenivorans (strain CJ2).